A 311-amino-acid polypeptide reads, in one-letter code: Thymidylate synthase (311 aa).

Residues Arg-28 and 172–173 each bind dUMP; that span reads RR. The Nucleophile role is filled by Cys-192. DUMP is bound by residues 213 to 216, Asn-224, and 254 to 256; these read RSCD and HLY. Asp-216 serves as a coordination point for (6R)-5,10-methylene-5,6,7,8-tetrahydrofolate. Ala-310 provides a ligand contact to (6R)-5,10-methylene-5,6,7,8-tetrahydrofolate.

This sequence belongs to the thymidylate synthase family. Bacterial-type ThyA subfamily. As to quaternary structure, homodimer.

It localises to the cytoplasm. The catalysed reaction is dUMP + (6R)-5,10-methylene-5,6,7,8-tetrahydrofolate = 7,8-dihydrofolate + dTMP. It participates in pyrimidine metabolism; dTTP biosynthesis. Catalyzes the reductive methylation of 2'-deoxyuridine-5'-monophosphate (dUMP) to 2'-deoxythymidine-5'-monophosphate (dTMP) while utilizing 5,10-methylenetetrahydrofolate (mTHF) as the methyl donor and reductant in the reaction, yielding dihydrofolate (DHF) as a by-product. This enzymatic reaction provides an intracellular de novo source of dTMP, an essential precursor for DNA biosynthesis. The polypeptide is Thymidylate synthase (Sphingopyxis alaskensis (strain DSM 13593 / LMG 18877 / RB2256) (Sphingomonas alaskensis)).